Reading from the N-terminus, the 233-residue chain is Orotidine 5'-phosphate decarboxylase (233 aa).

Residues D11, K34, 61-70 (DLKLHDIPNT), T117, R179, Q188, G208, and R209 each bind substrate. Residue K63 is the Proton donor of the active site.

This sequence belongs to the OMP decarboxylase family. Type 1 subfamily. As to quaternary structure, homodimer.

The catalysed reaction is orotidine 5'-phosphate + H(+) = UMP + CO2. Its pathway is pyrimidine metabolism; UMP biosynthesis via de novo pathway; UMP from orotate: step 2/2. Catalyzes the decarboxylation of orotidine 5'-monophosphate (OMP) to uridine 5'-monophosphate (UMP). The protein is Orotidine 5'-phosphate decarboxylase of Streptococcus pneumoniae (strain CGSP14).